The sequence spans 432 residues: Serine/threonine-protein kinase stk11 (432 aa).

The 261-residue stretch at 52–312 (YLMGDLLGEG…IQQIRQHNWF (261 aa)) folds into the Protein kinase domain. ATP-binding positions include 58 to 66 (LGEGSYGKV) and Lys81. Catalysis depends on Asp179, which acts as the Proton acceptor. The residue at position 192 (Thr192) is a Phosphothreonine; by autocatalysis. A disordered region spans residues 398 to 432 (TESQLKTERRVSSSSQRKASTTGSKVRKLSACKQQ). Polar residues predominate over residues 409–421 (SSSSQRKASTTGS). The segment covering 422 to 432 (KVRKLSACKQQ) has biased composition (basic residues). Ser427 is subject to Phosphoserine; by PKA.

This sequence belongs to the protein kinase superfamily. CAMK Ser/Thr protein kinase family. LKB1 subfamily. In terms of assembly, catalytic component of a trimeric complex composed of STK11/LKB1, STRAD (STRADA or STRADB) and CAB39/MO25 (CAB39/MO25alpha or CAB39L/MO25beta). Mg(2+) is required as a cofactor. It depends on Mn(2+) as a cofactor. Post-translationally, phosphorylated by a cAMP-dependent protein kinase. Autophosphorylated in a reaction that prefers Mn(2+) to Mg(2+). As to expression, oocytes, eggs and early embryos.

The protein localises to the nucleus. Its subcellular location is the cytoplasm. The catalysed reaction is L-seryl-[protein] + ATP = O-phospho-L-seryl-[protein] + ADP + H(+). It carries out the reaction L-threonyl-[protein] + ATP = O-phospho-L-threonyl-[protein] + ADP + H(+). Its function is as follows. Tumor suppressor serine/threonine-protein kinase that controls the activity of AMP-activated protein kinase (AMPK) family members, thereby playing a role in various processes such as cell metabolism, cell polarity, apoptosis and DNA damage response. Acts by phosphorylating the T-loop of AMPK family proteins, leading to promote their activity. The polypeptide is Serine/threonine-protein kinase stk11 (Xenopus laevis (African clawed frog)).